The sequence spans 562 residues: Protein FAM222B (562 aa).

Composition is skewed to low complexity over residues 147 to 167 and 183 to 201; these read PQAQALARQQALQHAQTLAHA and ALSHPQSLQQPQGLGHPQQ. Disordered regions lie at residues 147-242 and 537-562; these read PQAQ…PPNV and AHRAPGTRAPDPTDSRSLHIQHPGYR.

The protein belongs to the FAM222 family.

This chain is Protein FAM222B (Fam222b), found in Mus musculus (Mouse).